The following is a 480-amino-acid chain: Amino acid permease 5 (480 aa).

The interval 1–25 (MVVQNVQDLDVLPKHSSDSFDDDGR) is disordered. At 1–31 (MVVQNVQDLDVLPKHSSDSFDDDGRPKRTGT) the chain is on the cytoplasmic side. A compositionally biased stretch (basic and acidic residues) spans 11–25 (VLPKHSSDSFDDDGR). A run of 2 helical transmembrane segments spans residues 32-52 (VWTASAHIITAVIGSGVLSLA) and 53-73 (WAVAQIGWIGGPVAMLLFSFV). The Cytoplasmic portion of the chain corresponds to 74–120 (TFYTSTLLCSCYRSGDSVTGKRNYTYMDAIHSNLGGIKVKVCGVVQY). Residues 121–141 (VNLFGTAIGYTIASAISLVAI) form a helical membrane-spanning segment. At 142–157 (QRTSCQQMNGPNDPCH) the chain is on the extracellular side. The chain crosses the membrane as a helical span at residues 158 to 178 (VNGNVYMIAFGIVQIIFSQIP). Residues 179–182 (DFDQ) are Cytoplasmic-facing. A helical transmembrane segment spans residues 183–203 (LWWLSIVAAVMSFAYSAIGLG). Residues 204 to 241 (LGVSKVVENKEIKGSLTGVTVGTVTLSGTVTSSQKIWR) are Extracellular-facing. Residues 242–262 (TFQSLGNIAFAYSYSMILIEI) form a helical membrane-spanning segment. Over 263–280 (QDTVKSPPAEVNTMRKAT) the chain is Cytoplasmic. Residues 281-301 (FVSVAVTTVFYMLCGCVGYAA) traverse the membrane as a helical segment. Residues 302 to 328 (FGDNAPGNLLAHGGFRNPYWLLDIANL) lie on the Extracellular side of the membrane. The helical transmembrane segment at 329–349 (AIVIHLVGAYQVYCQPLFAFV) threads the bilayer. Residues 350–383 (EKEASRRFPESEFVTKEIKIQLFPGKPFNLNLFR) lie on the Cytoplasmic side of the membrane. Residues 384–404 (LVWRTFFVMTTTLISMLMPFF) traverse the membrane as a helical segment. The Extracellular portion of the chain corresponds to 405–406 (ND). Residues 407–427 (VVGLLGAIGFWPLTVYFPVEM) form a helical membrane-spanning segment. Over 428–445 (YIAQKNVPRWGTKWVCLQ) the chain is Cytoplasmic. Residues 446–466 (VLSVTCLFVSVAAAAGSVIGI) traverse the membrane as a helical segment. The Extracellular portion of the chain corresponds to 467 to 480 (VSDLKVYKPFQSEF).

Belongs to the amino acid/polyamine transporter 2 family. Amino acid/auxin permease (AAAP) (TC 2.A.18.2) subfamily. In terms of tissue distribution, expressed in leaves, stems, roots, siliques and flowers.

The protein resides in the cell membrane. With respect to regulation, inhibited by 2,4-dinitrophenol. In terms of biological role, amino acid-proton symporter. Stereospecific transporter with a broad specificity for glutamate and both neutral and basic amino acids. Reduced affinities for asparagine and valine. High affinity transport of the cationic amino acids arginine and lysine, but not of histidine. The polypeptide is Amino acid permease 5 (AAP5) (Arabidopsis thaliana (Mouse-ear cress)).